A 643-amino-acid polypeptide reads, in one-letter code: U3 small nucleolar RNA-associated protein 5 (643 aa).

WD repeat units lie at residues 14–54 (GQYL…LYLE), 55–98 (DSKL…VTYK), 186–225 (GHVSPVSTLQVITNEFFISGAEGDRFLNVYDIHSGMTKCV), 227–266 (VAESDIKELSHSGQADSIAVTTEDGSLEIFVDPLVSSSTK), 340–389 (SADR…LEQE), and 471–511 (RLKP…IHGG). Residues 565–643 (HSSEPVVEED…EAGYSDVEME (79 aa)) are disordered. Residues 570–611 (VVEEDEDDVEYNEELDDAGLIEDGEESYGSEEEEEGDSDNEE) show a composition bias toward acidic residues. Over residues 612–626 (EQKHTSSKQDGRLET) the composition is skewed to basic and acidic residues. Positions 627 to 643 (EQSDGEEEAGYSDVEME) are enriched in acidic residues.

This sequence belongs to the UTP5 family. Interacts with snoRNA U3. Interacts with MPP10. Component of the ribosomal small subunit (SSU) processome composed of at least 40 protein subunits and snoRNA U3. In the absence of snoRNA3, forms a complex with other t-UTPs. This complex can associate with pre-18S ribosomal RNAs.

The protein localises to the nucleus. Its subcellular location is the nucleolus. In terms of biological role, involved in nucleolar processing of pre-18S ribosomal RNA. Required for optimal pre-ribosomal RNA transcription by RNA polymerase I together with a subset of U3 proteins required for transcription (t-UTPs). This is U3 small nucleolar RNA-associated protein 5 (UTP5) from Saccharomyces cerevisiae (strain ATCC 204508 / S288c) (Baker's yeast).